The primary structure comprises 568 residues: CTP synthase (568 aa).

Residues 1-276 form an amidoligase domain region; the sequence is MPQARTIKHV…DAYLVRRLGL (276 aa). S18 lines the CTP pocket. UTP is bound at residue S18. Residues 19-24 and D76 contribute to the ATP site; that span reads SLGKGL. Residues D76 and E150 each coordinate Mg(2+). CTP contacts are provided by residues 157-159, 197-202, and K233; these read DIE and KTKPTQ. UTP is bound by residues 197–202 and K233; that span reads KTKPTQ. One can recognise a Glutamine amidotransferase type-1 domain in the interval 301-550; the sequence is RIALVGKYVD…VNAALEYRAA (250 aa). G364 contributes to the L-glutamine binding site. C391 (nucleophile; for glutamine hydrolysis) is an active-site residue. L-glutamine-binding positions include 392 to 395, E415, and R476; that span reads LGLQ. Active-site residues include H523 and E525.

The protein belongs to the CTP synthase family. As to quaternary structure, homotetramer.

It catalyses the reaction UTP + L-glutamine + ATP + H2O = CTP + L-glutamate + ADP + phosphate + 2 H(+). It carries out the reaction L-glutamine + H2O = L-glutamate + NH4(+). The enzyme catalyses UTP + NH4(+) + ATP = CTP + ADP + phosphate + 2 H(+). It functions in the pathway pyrimidine metabolism; CTP biosynthesis via de novo pathway; CTP from UDP: step 2/2. Allosterically activated by GTP, when glutamine is the substrate; GTP has no effect on the reaction when ammonia is the substrate. The allosteric effector GTP functions by stabilizing the protein conformation that binds the tetrahedral intermediate(s) formed during glutamine hydrolysis. Inhibited by the product CTP, via allosteric rather than competitive inhibition. In terms of biological role, catalyzes the ATP-dependent amination of UTP to CTP with either L-glutamine or ammonia as the source of nitrogen. Regulates intracellular CTP levels through interactions with the four ribonucleotide triphosphates. This chain is CTP synthase, found in Saccharopolyspora erythraea (strain ATCC 11635 / DSM 40517 / JCM 4748 / NBRC 13426 / NCIMB 8594 / NRRL 2338).